The following is a 232-amino-acid chain: Proteasome subunit alpha (232 aa).

It belongs to the peptidase T1A family. In terms of assembly, the 20S proteasome core is composed of 14 alpha and 14 beta subunits that assemble into four stacked heptameric rings, resulting in a barrel-shaped structure. The two inner rings, each composed of seven catalytic beta subunits, are sandwiched by two outer rings, each composed of seven alpha subunits. The catalytic chamber with the active sites is on the inside of the barrel. Has a gated structure, the ends of the cylinder being occluded by the N-termini of the alpha-subunits. Is capped by the proteasome-associated ATPase, ARC.

The protein resides in the cytoplasm. Its pathway is protein degradation; proteasomal Pup-dependent pathway. With respect to regulation, the formation of the proteasomal ATPase ARC-20S proteasome complex, likely via the docking of the C-termini of ARC into the intersubunit pockets in the alpha-rings, may trigger opening of the gate for substrate entry. Interconversion between the open-gate and close-gate conformations leads to a dynamic regulation of the 20S proteasome proteolysis activity. Functionally, component of the proteasome core, a large protease complex with broad specificity involved in protein degradation. This is Proteasome subunit alpha from Acidimicrobium ferrooxidans (strain DSM 10331 / JCM 15462 / NBRC 103882 / ICP).